The sequence spans 195 residues: Thymidine kinase (195 aa).

ATP is bound by residues 9-16 (ATMNAGKS) and 89-92 (DEAQ). Catalysis depends on Glu90, which acts as the Proton acceptor. 4 residues coordinate Zn(2+): Cys147, Cys149, Cys184, and His187.

Belongs to the thymidine kinase family. Homotetramer.

The protein localises to the cytoplasm. It carries out the reaction thymidine + ATP = dTMP + ADP + H(+). In Rhizobium meliloti (strain 1021) (Ensifer meliloti), this protein is Thymidine kinase.